The sequence spans 21 residues: Peptide PGLa-R3 (21 aa).

A Leucine amide modification is found at L21.

As to expression, expressed by the skin glands.

It is found in the secreted. Its function is as follows. Antimicrobial peptide. In Xenopus ruwenzoriensis (Uganda clawed frog), this protein is Peptide PGLa-R3.